A 356-amino-acid chain; its full sequence is Tyrosine recombinase XerS (356 aa).

One can recognise a Core-binding (CB) domain in the interval 16-121; the sequence is LMPWYVLEYY…ALSSLYKYLT (106 aa). The Tyr recombinase domain occupies 169 to 354; it reads EFLEYVDCEY…VNDEQKNALD (186 aa). Active-site residues include Arg210, Lys234, His306, Arg309, and His332. Catalysis depends on Tyr341, which acts as the O-(3'-phospho-DNA)-tyrosine intermediate.

Belongs to the 'phage' integrase family. XerS subfamily.

It localises to the cytoplasm. Its activity is regulated as follows. FtsK is required for recombination. In terms of biological role, site-specific tyrosine recombinase, which acts by catalyzing the cutting and rejoining of the recombining DNA molecules. Essential to convert dimers of the bacterial chromosome into monomers to permit their segregation at cell division. In Streptococcus mutans serotype c (strain ATCC 700610 / UA159), this protein is Tyrosine recombinase XerS.